Reading from the N-terminus, the 227-residue chain is 2,3-bisphosphoglycerate-dependent phosphoglycerate mutase (227 aa).

Residues 7 to 14, 20 to 21, Arg59, 86 to 89, Lys97, 113 to 114, and 182 to 183 each bind substrate; these read RHGFSEWN, TG, ERHY, RR, and GN. The Tele-phosphohistidine intermediate role is filled by His8. Catalysis depends on Glu86, which acts as the Proton donor/acceptor.

It belongs to the phosphoglycerate mutase family. BPG-dependent PGAM subfamily. Homodimer.

It catalyses the reaction (2R)-2-phosphoglycerate = (2R)-3-phosphoglycerate. It functions in the pathway carbohydrate degradation; glycolysis; pyruvate from D-glyceraldehyde 3-phosphate: step 3/5. Catalyzes the interconversion of 2-phosphoglycerate and 3-phosphoglycerate. This chain is 2,3-bisphosphoglycerate-dependent phosphoglycerate mutase, found in Haemophilus ducreyi (strain 35000HP / ATCC 700724).